The primary structure comprises 60 residues: U-actitoxin-Avd12b (60 aa).

An N-terminal signal peptide occupies residues S1 to S6. The propeptide occupies Y7 to N12. Residues E14–E56 form the EGF-like domain. Cystine bridges form between C18-C33, C27-C44, and C46-C55.

Belongs to the EGF domain peptide family.

It localises to the secreted. The protein localises to the nematocyst. Functionally, has both toxic and EGF activity. Its EGF activity consists of rounding cells (morphological change) and inducing tyrosine phosphorylation of the EGFR in A431 cells, but with a lower potency that human EGF. The sequence is that of U-actitoxin-Avd12b from Anemonia viridis (Snakelocks anemone).